Here is a 359-residue protein sequence, read N- to C-terminus: 3-dehydroquinate synthase (359 aa).

Residues 71–76 (DGEQYK), 105–109 (GVIGD), 129–130 (TT), lysine 142, lysine 151, and 169–172 (CLAT) each bind NAD(+). Zn(2+) is bound by residues glutamate 184, histidine 247, and histidine 264.

It belongs to the sugar phosphate cyclases superfamily. Dehydroquinate synthase family. Co(2+) is required as a cofactor. It depends on Zn(2+) as a cofactor. Requires NAD(+) as cofactor.

Its subcellular location is the cytoplasm. It carries out the reaction 7-phospho-2-dehydro-3-deoxy-D-arabino-heptonate = 3-dehydroquinate + phosphate. Its pathway is metabolic intermediate biosynthesis; chorismate biosynthesis; chorismate from D-erythrose 4-phosphate and phosphoenolpyruvate: step 2/7. Functionally, catalyzes the conversion of 3-deoxy-D-arabino-heptulosonate 7-phosphate (DAHP) to dehydroquinate (DHQ). This Baumannia cicadellinicola subsp. Homalodisca coagulata protein is 3-dehydroquinate synthase.